Here is a 420-residue protein sequence, read N- to C-terminus: Serine palmitoyltransferase (420 aa).

Pyridoxal 5'-phosphate is bound by residues Gly134–Tyr135, His234, Thr262, and Ser264. Position 265 is an N6-(pyridoxal phosphate)lysine (Lys265).

The protein belongs to the class-II pyridoxal-phosphate-dependent aminotransferase family. In terms of assembly, homodimer. Pyridoxal 5'-phosphate serves as cofactor.

It localises to the cytoplasm. The enzyme catalyses L-serine + hexadecanoyl-CoA + H(+) = 3-oxosphinganine + CO2 + CoA. The protein operates within lipid metabolism; sphingolipid metabolism. Not inhibited by relatively high concentrations of palmitoyl-CoA. Inhibited by both D-cycloserine (DCS) and L-cycloserine (LCS), which inactivate SPT by transamination to form a free pyridoxamine 5'-phosphate (PMP) and beta-aminooxyacetaldehyde that remain bound at the active site. Inhibition is reversed by incubation with excess pyridoxal phosphate. Inhibited by the fungal natural product myriocin, which acts as a competitive inhibitor for both L-serine and palmitoyl-CoA substrates. In terms of biological role, catalyzes the condensation of L-serine with palmitoyl-CoA (hexadecanoyl-CoA) to produce 3-oxosphinganine. Exhibits a broad substrate specificity concerning the chain length and the degree of unsaturation of acyl-CoA. This is Serine palmitoyltransferase from Sphingomonas paucimobilis (Pseudomonas paucimobilis).